We begin with the raw amino-acid sequence, 115 residues long: Regulator of ribonuclease activity B (115 aa).

The protein belongs to the RraB family. As to quaternary structure, interacts with the C-terminal region of Rne.

It is found in the cytoplasm. Functionally, globally modulates RNA abundance by binding to RNase E (Rne) and regulating its endonucleolytic activity. Can modulate Rne action in a substrate-dependent manner by altering the composition of the degradosome. This chain is Regulator of ribonuclease activity B, found in Aeromonas salmonicida (strain A449).